The following is a 140-amino-acid chain: MTRIAKPLIKSAMAAGLVTASMSLSTAVAHAGPSPNWDAVAQCESGGNWAANTGNGKYGGLQFKPATWAAFGGVGNPAAASREQQIAVANRVLAEQGLDAWPTCGAASGLPIALWSKPAQGIKQIINEIIWAGIQASIPR.

Positions 1-31 (MTRIAKPLIKSAMAAGLVTASMSLSTAVAHA) are cleaved as a signal peptide.

The protein belongs to the transglycosylase family. Rpf subfamily.

Its subcellular location is the secreted. Functionally, factor that stimulates resuscitation of dormant cells. Has peptidoglycan (PG) hydrolytic activity. The chain is Resuscitation-promoting factor RpfC (rpfC) from Mycobacterium tuberculosis (strain ATCC 35801 / TMC 107 / Erdman).